Reading from the N-terminus, the 126-residue chain is Holo-[acyl-carrier-protein] synthase (126 aa).

Asp9 and Glu58 together coordinate Mg(2+).

It belongs to the P-Pant transferase superfamily. AcpS family. Mg(2+) serves as cofactor.

The protein resides in the cytoplasm. The enzyme catalyses apo-[ACP] + CoA = holo-[ACP] + adenosine 3',5'-bisphosphate + H(+). Transfers the 4'-phosphopantetheine moiety from coenzyme A to a Ser of acyl-carrier-protein. In Erwinia tasmaniensis (strain DSM 17950 / CFBP 7177 / CIP 109463 / NCPPB 4357 / Et1/99), this protein is Holo-[acyl-carrier-protein] synthase.